Consider the following 104-residue polypeptide: Large ribosomal subunit protein uL24 (104 aa).

Belongs to the universal ribosomal protein uL24 family. In terms of assembly, part of the 50S ribosomal subunit.

Functionally, one of two assembly initiator proteins, it binds directly to the 5'-end of the 23S rRNA, where it nucleates assembly of the 50S subunit. One of the proteins that surrounds the polypeptide exit tunnel on the outside of the subunit. The protein is Large ribosomal subunit protein uL24 of Clostridium perfringens (strain ATCC 13124 / DSM 756 / JCM 1290 / NCIMB 6125 / NCTC 8237 / Type A).